Here is a 536-residue protein sequence, read N- to C-terminus: Chaperonin GroEL 1 (536 aa).

ATP contacts are provided by residues 29-32 (TLGP), 86-90 (DGTTT), glycine 413, 476-478 (NAA), and aspartate 492.

This sequence belongs to the chaperonin (HSP60) family. Forms a cylinder of 14 subunits composed of two heptameric rings stacked back-to-back. Interacts with the co-chaperonin GroES.

Its subcellular location is the cytoplasm. It carries out the reaction ATP + H2O + a folded polypeptide = ADP + phosphate + an unfolded polypeptide.. Functionally, together with its co-chaperonin GroES, plays an essential role in assisting protein folding. The GroEL-GroES system forms a nano-cage that allows encapsulation of the non-native substrate proteins and provides a physical environment optimized to promote and accelerate protein folding. This Nocardia farcinica (strain IFM 10152) protein is Chaperonin GroEL 1.